Here is a 136-residue protein sequence, read N- to C-terminus: Small ribosomal subunit protein bS16 (136 aa).

Residues Thr-114–Lys-123 are compositionally biased toward basic residues. The segment at Thr-114–Gly-136 is disordered.

The protein belongs to the bacterial ribosomal protein bS16 family.

The protein is Small ribosomal subunit protein bS16 of Chlorobium chlorochromatii (strain CaD3).